Consider the following 113-residue polypeptide: Dolichyl-diphosphooligosaccharide--protein glycosyltransferase subunit DAD1 (113 aa).

Residues 1–30 (MGSSAFEVLTFFLKDYKANTPQKLKIIDAY) lie on the Cytoplasmic side of the membrane. The chain crosses the membrane as a helical span at residues 31-51 (LLYILLTGINQFLYCCLVGTF). Position 52 (Pro-52) is a topological domain, lumenal. A helical membrane pass occupies residues 53–73 (FNSFLSGFISCVASFVLGVCL). Residues 74 to 92 (RLQVNPQNSSNFCGIPPER) are Cytoplasmic-facing. The chain crosses the membrane as a helical span at residues 93-113 (AFADFIFAHVVLHLVVMNFIG).

Belongs to the DAD/OST2 family. Component of the oligosaccharyltransferase (OST) complex. Widely expressed. Greatest expression seen in the epidermis, intermediate expression in the fat body and midgut and mild expression observed in the silk gland.

The protein resides in the endoplasmic reticulum membrane. Its pathway is protein modification; protein glycosylation. Subunit of the oligosaccharyl transferase (OST) complex that catalyzes the initial transfer of a defined glycan (Glc(3)Man(9)GlcNAc(2) in eukaryotes) from the lipid carrier dolichol-pyrophosphate to an asparagine residue within an Asn-X-Ser/Thr consensus motif in nascent polypeptide chains, the first step in protein N-glycosylation. N-glycosylation occurs cotranslationally and the complex associates with the Sec61 complex at the channel-forming translocon complex that mediates protein translocation across the endoplasmic reticulum (ER). All subunits are required for a maximal enzyme activity. The sequence is that of Dolichyl-diphosphooligosaccharide--protein glycosyltransferase subunit DAD1 from Araneus ventricosus (Orbweaver spider).